Reading from the N-terminus, the 89-residue chain is Small ribosomal subunit protein uS15 (89 aa).

This sequence belongs to the universal ribosomal protein uS15 family. In terms of assembly, part of the 30S ribosomal subunit. Forms a bridge to the 50S subunit in the 70S ribosome, contacting the 23S rRNA.

Its function is as follows. One of the primary rRNA binding proteins, it binds directly to 16S rRNA where it helps nucleate assembly of the platform of the 30S subunit by binding and bridging several RNA helices of the 16S rRNA. Forms an intersubunit bridge (bridge B4) with the 23S rRNA of the 50S subunit in the ribosome. In Lactobacillus delbrueckii subsp. bulgaricus (strain ATCC 11842 / DSM 20081 / BCRC 10696 / JCM 1002 / NBRC 13953 / NCIMB 11778 / NCTC 12712 / WDCM 00102 / Lb 14), this protein is Small ribosomal subunit protein uS15.